Consider the following 784-residue polypeptide: DNA repair and recombination protein RAD54-like (784 aa).

The tract at residues 1-54 (MRRSLAPSQRGPMRPESRHSFTPPLLKKNKRSCQQELEREQELDRKRQSALRDA) is disordered. The tract at residues 2–9 (RRSLAPSQ) is required for chromatin remodeling, strand pairing activities and coupling of ATPase activity. At Ser-20 the chain carries Phosphoserine. Residue Thr-22 is modified to Phosphothreonine. Basic and acidic residues predominate over residues 36–47 (ELEREQELDRKR). The 175-residue stretch at 172-346 (EGKRGNFNGC…YSLVNFVNPE (175 aa)) folds into the Helicase ATP-binding domain. An ATP-binding site is contributed by 185–192 (DEMGLGKT). The short motif at 297–300 (DEGH) is the DEGH box element. The 158-residue stretch at 503–660 (LLDFMLAAIR…NNESAEKHFT (158 aa)) folds into the Helicase C-terminal domain. Residues 751-784 (EEAASEQPEEKPDRRKRPSTPPSDDSADEDFLGF) form a disordered region. Acidic residues predominate over residues 775–784 (DSADEDFLGF).

The protein belongs to the SNF2/RAD54 helicase family. As to quaternary structure, interacts (via N-terminus) with spn-A/Rad51.

It localises to the nucleus. Functionally, involved in mitotic DNA repair and meiotic recombination. Functions in the recombinational DNA repair pathway. Essential for interhomolog gene conversion (GC), but may have a less important role in intersister GC than spn-A/Rad51. In the presence of DNA, spn-A/Rad51 enhances the ATPase activity of okr/Rad54. This chain is DNA repair and recombination protein RAD54-like, found in Drosophila yakuba (Fruit fly).